Here is a 305-residue protein sequence, read N- to C-terminus: Olfactory receptor 5M11 (305 aa).

The Extracellular portion of the chain corresponds to methionine 1–serine 25. N-linked (GlcNAc...) asparagine glycosylation is present at asparagine 5. The helical transmembrane segment at leucine 26–isoleucine 46 threads the bilayer. Residues methionine 47–arginine 54 lie on the Cytoplasmic side of the membrane. A helical transmembrane segment spans residues leucine 55–serine 75. At asparagine 76–threonine 98 the chain is on the extracellular side. A disulfide bridge links cysteine 96 with cysteine 188. The helical transmembrane segment at glutamine 99–tyrosine 119 threads the bilayer. At aspartate 120–arginine 138 the chain is on the cytoplasmic side. The helical transmembrane segment at valine 139–alanine 159 threads the bilayer. At isoleucine 160–glutamate 195 the chain is on the extracellular side. The chain crosses the membrane as a helical span at residues histidine 196–serine 216. Over tyrosine 217 to alanine 236 the chain is Cytoplasmic. Residues phenylalanine 237–methionine 257 traverse the membrane as a helical segment. Topologically, residues tyrosine 258 to serine 270 are extracellular. Residues lysine 271 to leucine 291 form a helical membrane-spanning segment. Residues arginine 292–arginine 305 are Cytoplasmic-facing.

It belongs to the G-protein coupled receptor 1 family.

The protein resides in the cell membrane. Odorant receptor. In Homo sapiens (Human), this protein is Olfactory receptor 5M11 (OR5M11).